The primary structure comprises 313 residues: Ribosomal RNA small subunit methyltransferase H (313 aa).

S-adenosyl-L-methionine is bound by residues 35-37 (GGH), Asp-55, Phe-79, Asp-101, and Gln-108.

Belongs to the methyltransferase superfamily. RsmH family.

It is found in the cytoplasm. It catalyses the reaction cytidine(1402) in 16S rRNA + S-adenosyl-L-methionine = N(4)-methylcytidine(1402) in 16S rRNA + S-adenosyl-L-homocysteine + H(+). Its function is as follows. Specifically methylates the N4 position of cytidine in position 1402 (C1402) of 16S rRNA. The protein is Ribosomal RNA small subunit methyltransferase H of Erwinia tasmaniensis (strain DSM 17950 / CFBP 7177 / CIP 109463 / NCPPB 4357 / Et1/99).